The following is a 589-amino-acid chain: Complement component C8 beta chain (589 aa).

Residues 1 to 31 (MKIGAQVWRALAKSCLLCATLGCLHFPGSRG) form the signal peptide. Positions 32–53 (GKPDFFETKAVNGSLVKSRPVR) are excised as a propeptide. N43 is a glycosylation site (N-linked (GlcNAc...) asparagine). The TSP type-1 1 domain occupies 63 to 116 (DCELSTWSSWTACDPCQKKRYRHTYLLRPSQFYGELCDLSDKEVEDCVTNQPCR). Cystine bridges form between C64–C99, C75–C109, C78–C115, C121–C132, C126–C145, C139–C154, and C161–C199. 2 C-linked (Man) tryptophan glycosylation sites follow: W69 and W72. The LDL-receptor class A domain occupies 120–155 (RCEGFVCAQTGRCVNRRLLCNGDNDCGDQSDEANCR). Positions 137, 140, 142, 144, 150, and 151 each coordinate Ca(2+). Positions 157–503 (IYKNCQREME…EFQSEVSSCR (347 aa)) constitute an MACPF domain. A run of 8 beta stranded transmembrane segments spans residues 201 to 206 (PHYILD), 209 to 213 (FRKPY), 251 to 258 (FNFTSGFK), 261 to 268 (GVMDLGIK), 328 to 335 (SYGEYRDL), 338 to 343 (DFGTHF), 378 to 385 (AGGSFGIG), and 391 to 398 (VYVKVGVS). An intrachain disulfide couples C377 to C402. Residues 404–534 (DIMKEINERN…PGGFQGTACE (131 aa)) form the EGF-like domain. T417 bears the Phosphothreonine mark. 4 disulfides stabilise this stretch: C502–C549, C504–C520, C507–C522, and C524–C533. The TSP type-1 2 domain maps to 544-587 (DGKWSCWSDWSACSGGHKTRHRQCNNPAPHKGGSPCSGPASETL). Residues W550 and W553 are each glycosylated (C-linked (Man) tryptophan). Cysteines 556 and 589 form a disulfide. The segment at 570–589 (PAPHKGGSPCSGPASETLNC) is disordered.

It belongs to the complement C6/C7/C8/C9 family. In terms of assembly, heterotrimer of 3 chains: alpha (C8A), beta (C8B) and gamma (C8G); the alpha and gamma chains are disulfide bonded. Component of the membrane attack complex (MAC), composed of complement C5b, C6, C7, C8A, C8B, C8G and multiple copies of the pore-forming subunit C9. Post-translationally, N-glycosylated; contains one or two bound glycans. Not O-glycosylated.

The protein resides in the secreted. The protein localises to the target cell membrane. Its activity is regulated as follows. Membrane attack complex (MAC) assembly is inhibited by CD59, thereby protecting self-cells from damage during complement activation. CD59 acts by binding to the beta-haipins of C8 (C8A and C8B), forming an intermolecular beta-sheet that prevents incorporation of the multiple copies of C9 required for complete formation of the osmolytic pore. MAC assembly is also inhibited by clusterin (CLU) chaperones that inhibit polymerization of C9. Component of the membrane attack complex (MAC), a multiprotein complex activated by the complement cascade, which inserts into a target cell membrane and forms a pore, leading to target cell membrane rupture and cell lysis. The MAC is initiated by proteolytic cleavage of C5 into complement C5b in response to the classical, alternative, lectin and GZMK complement pathways. The complement pathways consist in a cascade of proteins that leads to phagocytosis and breakdown of pathogens and signaling that strengthens the adaptive immune system. C8B, together with C8A and C8G, inserts into the target membrane, but does not form pores by itself. During MAC assembly, associates with C5b, C6 and C7 to form the C5b8 intermediate complex that inserts into the target membrane and traverses the bilayer increasing membrane rigidity. This chain is Complement component C8 beta chain (C8b), found in Mus musculus (Mouse).